Here is a 142-residue protein sequence, read N- to C-terminus: MLEKLAEAHPVWKEEEFGDKDAEDYIISYSMYNGSWLVWEKDGMPVAVSYHLEWSPSNGKPWLGTVLIDPAEEKKGHAKMIIEQISKLLRAKHKAMFAGVPIERREWILFLSQCGFEQLKTEKDEKGKSFMILVKPLAEAAV.

One can recognise an N-acetyltransferase domain in the interval 1 to 138 (MLEKLAEAHP…SFMILVKPLA (138 aa)).

This is an uncharacterized protein from Bacillus subtilis (strain 168).